Here is a 267-residue protein sequence, read N- to C-terminus: Centromere protein Q (267 aa).

Composition is skewed to basic residues over residues 1-22 and 39-49; these read MSGKARASRKKPQQVKRSLKQR and KRNRSHAKHLS. A disordered region spans residues 1-54; the sequence is MSGKARASRKKPQQVKRSLKQRANKEADLPENEVGNTAKRNRSHAKHLSSKVTG. The residue at position 49 (Ser49) is a Phosphoserine. A coiled-coil region spans residues 100–202; the sequence is IKRKEEIQCH…EEQEVKQVFH (103 aa).

It belongs to the CENP-Q/OKP1 family. In terms of assembly, component of the CENPA-CAD complex, composed of CENPI, CENPK, CENPL, CENPO, CENPP, CENPQ, CENPR and CENPS. The CENPA-CAD complex interacts with the CENPA-NAC complex, at least composed of CENPA, CENPC, CENPH, CENPM, CENPN, CENPT and CENPU. In terms of processing, phosphorylation at Ser-49 is essential for CENPE recruitment to kinetochores and orderly chromosome congression.

Its subcellular location is the nucleus. The protein resides in the chromosome. The protein localises to the centromere. In terms of biological role, component of the CENPA-CAD (nucleosome distal) complex, a complex recruited to centromeres which is involved in assembly of kinetochore proteins, mitotic progression and chromosome segregation. May be involved in incorporation of newly synthesized CENPA into centromeres via its interaction with the CENPA-NAC complex. Plays an important role in chromosome congression and in the recruitment of CENP-O complex (which comprises CENPO, CENPP, CENPQ and CENPU), CENPE and PLK1 to the kinetochores. This is Centromere protein Q (Cenpq) from Mus musculus (Mouse).